The chain runs to 102 residues: Integration host factor subunit alpha (102 aa).

Belongs to the bacterial histone-like protein family. In terms of assembly, heterodimer of an alpha and a beta chain.

Functionally, this protein is one of the two subunits of integration host factor, a specific DNA-binding protein that functions in genetic recombination as well as in transcriptional and translational control. The protein is Integration host factor subunit alpha of Buchnera aphidicola subsp. Acyrthosiphon pisum (strain 5A).